Consider the following 68-residue polypeptide: DNA-directed RNA polymerase subunit Rpo10 (68 aa).

Positions 7, 10, 44, and 45 each coordinate Zn(2+).

This sequence belongs to the archaeal Rpo10/eukaryotic RPB10 RNA polymerase subunit family. Part of the RNA polymerase complex. It depends on Zn(2+) as a cofactor.

The protein localises to the cytoplasm. It catalyses the reaction RNA(n) + a ribonucleoside 5'-triphosphate = RNA(n+1) + diphosphate. Its function is as follows. DNA-dependent RNA polymerase (RNAP) catalyzes the transcription of DNA into RNA using the four ribonucleoside triphosphates as substrates. This is DNA-directed RNA polymerase subunit Rpo10 from Methanococcus maripaludis (strain C7 / ATCC BAA-1331).